Reading from the N-terminus, the 185-residue chain is Translation initiation factor IF-3 (185 aa).

It belongs to the IF-3 family. In terms of assembly, monomer.

Its subcellular location is the cytoplasm. IF-3 binds to the 30S ribosomal subunit and shifts the equilibrium between 70S ribosomes and their 50S and 30S subunits in favor of the free subunits, thus enhancing the availability of 30S subunits on which protein synthesis initiation begins. This is Translation initiation factor IF-3 from Bacteroides thetaiotaomicron (strain ATCC 29148 / DSM 2079 / JCM 5827 / CCUG 10774 / NCTC 10582 / VPI-5482 / E50).